A 162-amino-acid chain; its full sequence is V-type proton ATPase subunit c' (162 aa).

Topologically, residues 1–11 (MSSNLCPIYSS) are lumenal. Residues 12–32 (FFGFAGVCASMVFSCLGAGYG) traverse the membrane as a helical segment. At 33-54 (TALAGRGIAAVGAFRPEIVMKS) the chain is on the cytoplasmic side. Residues 55–75 (LIPVVMSGIIGVYGLVMSVLI) form a helical membrane-spanning segment. At 76–93 (AGDMSPDNDYSLFSGFIH) the chain is on the lumenal side. A helical membrane pass occupies residues 94–114 (LSAGLAVGLTGVAAGYAIGVV). Topologically, residues 115–132 (GDRGVQSFMRQDRIFVSM) are cytoplasmic. A helical transmembrane segment spans residues 133-153 (VLILIFAEVLGLYGLIVGLIL). The Lumenal segment spans residues 154–162 (QTKTSNVCY).

It belongs to the V-ATPase proteolipid subunit family. In terms of assembly, V-ATPase is a heteromultimeric enzyme composed of a peripheral catalytic V1 complex (components A to H) attached to an integral membrane V0 proton pore complex (components: a, c, c', c'', d, e, f and VOA1). The decameric c-ring forms the proton-conducting pore, and is composed of eight proteolipid subunits c, one subunit c' and one subunit c''.

The protein localises to the vacuole membrane. Its function is as follows. Proton-conducting pore forming subunit of the V0 complex of vacuolar(H+)-ATPase (V-ATPase), a multisubunit enzyme composed of a peripheral complex (V1) that hydrolyzes ATP and a membrane integral complex (V0) that translocates protons. V-ATPase is responsible for acidifying and maintaining the pH of intracellular compartments. The polypeptide is V-type proton ATPase subunit c' (Schizosaccharomyces pombe (strain 972 / ATCC 24843) (Fission yeast)).